A 125-amino-acid polypeptide reads, in one-letter code: MRWQGSSRRKATGGKIIAARGKRKFEMGRESAETRISDVKRKNVHTMGGNRKVRLLQSNVANITNPKDGKTVTATIETVIDNTANKHYVRRNILTKGSVIRTPVGTARVTSRPGQDGVINAVLIE.

The protein belongs to the eukaryotic ribosomal protein eS8 family. As to quaternary structure, part of the 30S ribosomal subunit.

This Methanosarcina mazei (strain ATCC BAA-159 / DSM 3647 / Goe1 / Go1 / JCM 11833 / OCM 88) (Methanosarcina frisia) protein is Small ribosomal subunit protein eS8.